A 146-amino-acid polypeptide reads, in one-letter code: Hemoglobin subunit beta-2 (146 aa).

Valine 1 carries the N-acetylvaline modification. The Globin domain maps to 2 to 146 (HLHGDEKAAV…VASALAHKYH (145 aa)). An N6-succinyllysine modification is found at lysine 17. Serine 44 carries the phosphoserine modification. An N6-succinyllysine modification is found at lysine 59. Residues histidine 63 and histidine 92 each contribute to the heme b site. Arginine 104 carries the asymmetric dimethylarginine modification. Threonine 123 carries the post-translational modification Phosphothreonine.

The protein belongs to the globin family. Heterotetramer of two alpha chains and two beta chains. Red blood cells.

Involved in oxygen transport from the lung to the various peripheral tissues. The sequence is that of Hemoglobin subunit beta-2 (HBB2) from Tapirus terrestris (Lowland tapir).